Here is a 792-residue protein sequence, read N- to C-terminus: Alpha-1,6-mannosylglycoprotein 6-beta-N-acetylglucosaminyltransferase B (792 aa).

Residues 1-24 are Cytoplasmic-facing; sequence MITVNPDGKIMVRRCLVTLRPFRL. Residues 25 to 45 form a helical; Signal-anchor for type II membrane protein membrane-spanning segment; sequence FVLGIGFFTLCFLMTSLGGQF. Residues 46-792 are Lumenal-facing; sequence SARRLGDSPF…GQVALCQGCL (747 aa). Asparagine 127 carries an N-linked (GlcNAc...) asparagine glycan. Cystine bridges form between cysteine 157/cysteine 195, cysteine 168/cysteine 208, cysteine 184/cysteine 353, cysteine 387/cysteine 644, cysteine 700/cysteine 775, cysteine 704/cysteine 777, cysteine 711/cysteine 764, cysteine 732/cysteine 753, and cysteine 788/cysteine 791.

The protein belongs to the glycosyltransferase 18 family. Requires Mn(2+) as cofactor. In terms of tissue distribution, predominantly expressed in brain. Expressed in all areas of the adult and fetal brain. Also expressed at much lower levels in testis, spleen and thymus.

It is found in the golgi apparatus membrane. The catalysed reaction is N(4)-{beta-D-GlcNAc-(1-&gt;2)-[beta-D-GlcNAc-(1-&gt;4)]-alpha-D-Man-(1-&gt;3)-[beta-D-GlcNAc-(1-&gt;2)-alpha-D-Man-(1-&gt;6)]-beta-D-Man-(1-&gt;4)-beta-D-GlcNAc-(1-&gt;4)-beta-D-GlcNAc}-L-asparaginyl-[protein] + UDP-N-acetyl-alpha-D-glucosamine = N(4)-{beta-D-GlcNAc-(1-&gt;2)-[beta-D-GlcNAc-(1-&gt;4)]-alpha-D-Man-(1-&gt;3)-[beta-D-GlcNAc-(1-&gt;2)-[beta-D-GlcNAc-(1-&gt;6)]-alpha-D-Man-(1-&gt;6)]-beta-D-Man-(1-&gt;4)-beta-D-GlcNAc-(1-&gt;4)-beta-D-GlcNAc}-L-asparaginyl-[protein] + UDP + H(+). It carries out the reaction 3-O-[N-acetyl-beta-D-glucosaminyl-(1-&gt;2)-alpha-D-mannosyl]-L-seryl-[protein] + UDP-N-acetyl-alpha-D-glucosamine = O(3)-{N-acetyl-beta-D-glucosaminyl-(1-&gt;2)-[N-acetyl-beta-D-glucosaminyl-(1-&gt;6)]-alpha-D-mannosyl}-L-seryl-[protein] + UDP + H(+). The enzyme catalyses 3-O-[N-acetyl-beta-D-glucosaminyl-(1-&gt;2)-alpha-D-mannosyl]-L-threonyl-[protein] + UDP-N-acetyl-alpha-D-glucosamine = O(3)-{N-acetyl-beta-D-glucosaminyl-(1-&gt;2)-[N-acetyl-beta-D-glucosaminyl-(1-&gt;6)]-alpha-D-mannosyl}-L-threonyl-[protein] + UDP + H(+). It functions in the pathway protein modification; protein glycosylation. In terms of biological role, glycosyltransferase that acts on alpha-linked mannose of N-glycans and O-mannosyl glycans. Catalyzes the transfer of N-acetylglucosamine (GlcNAc) to the beta 1-6 linkage of the mannose residue of GlcNAc-beta1,2-Man-alpha on both the alpha1,3- and alpha1,6-linked mannose arms in the core structure of N-glycan. Also acts on the GlcNAc-beta1,2-Man-alpha1-Ser/Thr moiety, forming a 2,6-branched structure in brain O-mannosyl glycan. Plays an active role in modulating integrin and laminin-dependent adhesion and migration of neuronal cells via its activity in the O-mannosyl glycan pathway. The protein is Alpha-1,6-mannosylglycoprotein 6-beta-N-acetylglucosaminyltransferase B (MGAT5B) of Homo sapiens (Human).